A 242-amino-acid polypeptide reads, in one-letter code: MSIWEYANPVKFMQTSGRLLPWVVAATVLTLLPGLVWGFFFTPVAAEFGATVKVIYVHVPAATLAINIWVMMLVASLIWLIRRHHVSALAAKAAAPIGMVMTLIALITGAFWGQPMWGTWWEWDPRLTSFLILFLFYLGYMALWEAIENPDTAADLTGVLCLVGSVFAVLSRYAAIFWNQGLHQGSTLSLDKEEHIADVYWQPLVLSIAGFGMLFVALLLLRTRTEIRARRLKALEQRERMA.

6 helical membrane-spanning segments follow: residues 21 to 41 (PWVVAATVLTLLPGLVWGFFF), 61 to 81 (AATLAINIWVMMLVASLIWLI), 93 to 113 (AAAPIGMVMTLIALITGAFWG), 127 to 147 (LTSFLILFLFYLGYMALWEAI), 158 to 178 (GVLCLVGSVFAVLSRYAAIFW), and 201 to 221 (WQPLVLSIAGFGMLFVALLLL).

The protein belongs to the CcmC/CycZ/HelC family.

It is found in the cell inner membrane. Required for the export of heme to the periplasm for the biogenesis of c-type cytochromes. The protein is Heme exporter protein C (helC) of Rhodobacter capsulatus (strain ATCC BAA-309 / NBRC 16581 / SB1003).